We begin with the raw amino-acid sequence, 127 residues long: Large ribosomal subunit protein uL22 (127 aa).

This sequence belongs to the universal ribosomal protein uL22 family. Part of the 50S ribosomal subunit.

In terms of biological role, this protein binds specifically to 23S rRNA; its binding is stimulated by other ribosomal proteins, e.g. L4, L17, and L20. It is important during the early stages of 50S assembly. It makes multiple contacts with different domains of the 23S rRNA in the assembled 50S subunit and ribosome. Functionally, the globular domain of the protein is located near the polypeptide exit tunnel on the outside of the subunit, while an extended beta-hairpin is found that lines the wall of the exit tunnel in the center of the 70S ribosome. The polypeptide is Large ribosomal subunit protein uL22 (Methylobacterium sp. (strain 4-46)).